Here is a 209-residue protein sequence, read N- to C-terminus: Germin-like protein (209 aa).

An N-terminal signal peptide occupies residues 1 to 18 (MIVPIFFLFSLLFSSSHG). Cys-24 and Cys-39 are joined by a disulfide. The Cupin type-1 domain occupies 53–199 (SGLGITGNTT…ASFLDPAEIK (147 aa)). Residue Asn-60 is glycosylated (N-linked (GlcNAc...) asparagine). Mn(2+) is bound by residues His-101, His-103, Glu-108, and His-147.

It is found in the secreted. Its subcellular location is the extracellular space. It localises to the apoplast. Functionally, has antibacterial activity against B.subtilis (MIC=5 ug), B.cereus (MIC=50 ug), A.hydrophila (MIC=2.5 ug), S.marcescens(MIC=10 ug), S.enterica (MIC=10 ug), P.entomophila (MIC=2.5 ug) and P.rhodesiae (MIC=10 ug). Has antifungal activity against F.solani KACC 40384 and F.oxysporum KACC 40032. Probably has no oxalate oxidase activity even if the active site is conserved. The sequence is that of Germin-like protein from Morus alba (White mulberry).